A 288-amino-acid polypeptide reads, in one-letter code: Bifunctional protein FolD (288 aa).

Residues 166-168, Ser191, and Ile232 contribute to the NADP(+) site; that span reads GRS.

The protein belongs to the tetrahydrofolate dehydrogenase/cyclohydrolase family. In terms of assembly, homodimer.

The enzyme catalyses (6R)-5,10-methylene-5,6,7,8-tetrahydrofolate + NADP(+) = (6R)-5,10-methenyltetrahydrofolate + NADPH. The catalysed reaction is (6R)-5,10-methenyltetrahydrofolate + H2O = (6R)-10-formyltetrahydrofolate + H(+). It functions in the pathway one-carbon metabolism; tetrahydrofolate interconversion. Functionally, catalyzes the oxidation of 5,10-methylenetetrahydrofolate to 5,10-methenyltetrahydrofolate and then the hydrolysis of 5,10-methenyltetrahydrofolate to 10-formyltetrahydrofolate. This is Bifunctional protein FolD from Rickettsia canadensis (strain McKiel).